A 220-amino-acid polypeptide reads, in one-letter code: Adenylate kinase (220 aa).

Gly-10–Thr-15 is a binding site for ATP. The interval Ser-30–Val-59 is NMP. AMP-binding positions include Thr-31, Arg-36, Lys-57–Val-59, Gly-85–Arg-88, and Gln-92. Residues Gly-122–Gly-150 are disordered. Positions Gly-122–Asp-159 are LID. ATP-binding positions include Arg-123 and Thr-132 to Tyr-133. AMP is bound by residues Arg-156 and Arg-167. Residue Gly-206 participates in ATP binding.

It belongs to the adenylate kinase family. In terms of assembly, monomer.

It localises to the cytoplasm. The catalysed reaction is AMP + ATP = 2 ADP. It participates in purine metabolism; AMP biosynthesis via salvage pathway; AMP from ADP: step 1/1. Its function is as follows. Catalyzes the reversible transfer of the terminal phosphate group between ATP and AMP. Plays an important role in cellular energy homeostasis and in adenine nucleotide metabolism. In Burkholderia ambifaria (strain MC40-6), this protein is Adenylate kinase.